Here is a 710-residue protein sequence, read N- to C-terminus: Polyribonucleotide nucleotidyltransferase (710 aa).

2 residues coordinate Mg(2+): Asp486 and Asp492. Residues 553 to 612 form the KH domain; sequence PRFETIKIHPDKIRDIIGKGGATIRSITEETNSSIDIDDDGTVKVYADDNEALQAALNRI. Residues 622 to 690 form the S1 motif domain; it reads GAIYEGTVVR…QRGRIKLSIK (69 aa).

Belongs to the polyribonucleotide nucleotidyltransferase family. As to quaternary structure, component of the RNA degradosome, which is a multiprotein complex involved in RNA processing and mRNA degradation. The cofactor is Mg(2+).

It is found in the cytoplasm. The catalysed reaction is RNA(n+1) + phosphate = RNA(n) + a ribonucleoside 5'-diphosphate. Its function is as follows. Involved in mRNA degradation. Catalyzes the phosphorolysis of single-stranded polyribonucleotides processively in the 3'- to 5'-direction. The sequence is that of Polyribonucleotide nucleotidyltransferase from Cellvibrio japonicus (strain Ueda107) (Pseudomonas fluorescens subsp. cellulosa).